A 182-amino-acid polypeptide reads, in one-letter code: Ribosome-recycling factor (182 aa).

The protein belongs to the RRF family.

The protein resides in the cytoplasm. Its function is as follows. Responsible for the release of ribosomes from messenger RNA at the termination of protein biosynthesis. May increase the efficiency of translation by recycling ribosomes from one round of translation to another. The polypeptide is Ribosome-recycling factor (Prochlorococcus marinus (strain MIT 9215)).